We begin with the raw amino-acid sequence, 239 residues long: 1-(5-phosphoribosyl)-5-[(5-phosphoribosylamino)methylideneamino] imidazole-4-carboxamide isomerase (239 aa).

D9 functions as the Proton acceptor in the catalytic mechanism. The active-site Proton donor is D131.

This sequence belongs to the HisA/HisF family.

The protein resides in the cytoplasm. The enzyme catalyses 1-(5-phospho-beta-D-ribosyl)-5-[(5-phospho-beta-D-ribosylamino)methylideneamino]imidazole-4-carboxamide = 5-[(5-phospho-1-deoxy-D-ribulos-1-ylimino)methylamino]-1-(5-phospho-beta-D-ribosyl)imidazole-4-carboxamide. Its pathway is amino-acid biosynthesis; L-histidine biosynthesis; L-histidine from 5-phospho-alpha-D-ribose 1-diphosphate: step 4/9. This Bacteroides fragilis (strain ATCC 25285 / DSM 2151 / CCUG 4856 / JCM 11019 / LMG 10263 / NCTC 9343 / Onslow / VPI 2553 / EN-2) protein is 1-(5-phosphoribosyl)-5-[(5-phosphoribosylamino)methylideneamino] imidazole-4-carboxamide isomerase.